A 367-amino-acid chain; its full sequence is Adenosine deaminase (367 aa).

Histidine 46 and histidine 48 together coordinate Zn(2+). Residues 48–50, aspartate 176, and glycine 205 contribute to the a purine D-ribonucleoside site; that span reads HLD. A gating helix loop; regulates binding affinity for substrates and thus substrate selectivity region spans residues 174 to 188; the sequence is TGDGGLSHERMKEAA. Histidine 230 serves as a coordination point for Zn(2+). A purine D-ribonucleoside is bound by residues glutamate 233, histidine 257, and aspartate 314. Aspartate 314 is a binding site for Zn(2+).

Belongs to the metallo-dependent hydrolases superfamily. Adenosine and AMP deaminases family. Requires Zn(2+) as cofactor.

The enzyme catalyses adenosine + H2O + H(+) = inosine + NH4(+). It catalyses the reaction S-methyl-5'-thioadenosine + H2O + H(+) = S-methyl-5'-thioinosine + NH4(+). It functions in the pathway purine metabolism; purine nucleoside salvage. With respect to regulation, inhibited by coformycin and methylthiocoformycin (MT-coformycin). Functionally, catalyzes the hydrolytic deamination of adenosine to produce inosine. Unlike mammalian adenosine deaminases, also catalyzes the deamination of 5'-methylthioadenosine (MTA), a by-product of polyamine biosynthesis, to produce 5'-methylthioinosine (MTI). Plays an essential role in the purine salvage pathway which allows the parasite to use host cell purines for the synthesis of nucleic acids. In Plasmodium falciparum (isolate 3D7), this protein is Adenosine deaminase.